A 317-amino-acid chain; its full sequence is Methionyl-tRNA formyltransferase (317 aa).

109-112 (SLLP) is a binding site for (6S)-5,6,7,8-tetrahydrofolate.

The protein belongs to the Fmt family.

It catalyses the reaction L-methionyl-tRNA(fMet) + (6R)-10-formyltetrahydrofolate = N-formyl-L-methionyl-tRNA(fMet) + (6S)-5,6,7,8-tetrahydrofolate + H(+). In terms of biological role, attaches a formyl group to the free amino group of methionyl-tRNA(fMet). The formyl group appears to play a dual role in the initiator identity of N-formylmethionyl-tRNA by promoting its recognition by IF2 and preventing the misappropriation of this tRNA by the elongation apparatus. The protein is Methionyl-tRNA formyltransferase of Halalkalibacterium halodurans (strain ATCC BAA-125 / DSM 18197 / FERM 7344 / JCM 9153 / C-125) (Bacillus halodurans).